The following is a 434-amino-acid chain: Lecithin-cholesterol acyltransferase-like 1 (434 aa).

Serine 191 acts as the Acyl-ester intermediate in catalysis. Active-site charge relay system residues include aspartate 354 and histidine 386.

This sequence belongs to the AB hydrolase superfamily. Lipase family.

The chain is Lecithin-cholesterol acyltransferase-like 1 from Oryza sativa subsp. japonica (Rice).